We begin with the raw amino-acid sequence, 224 residues long: Oxaloacetate tautomerase FAHD2, mitochondrial (224 aa).

Residues 1 to 30 (MATSMIQRLFKQGTKIVGVGLNYASHAKEL) constitute a mitochondrion transit peptide. The Mg(2+) site is built by Glu-67, Glu-69, and Asp-98.

Belongs to the FAH family. The cofactor is Mg(2+). It depends on Mn(2+) as a cofactor.

Its subcellular location is the mitochondrion. The catalysed reaction is oxaloacetate = enol-oxaloacetate. In terms of biological role, tautomerase that converts enol-oxaloacetate, a strong inhibitor of succinate dehydrogenase, to the physiological keto form of oxaloacetate. This Arabidopsis thaliana (Mouse-ear cress) protein is Oxaloacetate tautomerase FAHD2, mitochondrial.